The primary structure comprises 245 residues: RNA polymerase sigma factor SigI5 (245 aa).

Positions 60–73 (DEYSIGLMAFNEAI) match the Polymerase core binding motif. The segment at residues 202 to 221 (MKELSKIIDVHPKTVERNRA) is a DNA-binding region (H-T-H motif).

It belongs to the sigma-70 factor family. SigI subfamily. As to quaternary structure, interacts with RsgI5.

It localises to the cytoplasm. Its activity is regulated as follows. Negatively regulated by the anti-sigma-I factor RsgI5. Binding of the polysaccharide substrate to RsgI5 may lead to the release and activation of SigI5. In terms of biological role, sigma factors are initiation factors that promote the attachment of RNA polymerase to specific initiation sites and are then released. This sigma factor is involved in regulation of cellulosomal genes via an external polysaccharide-sensing mechanism. The protein is RNA polymerase sigma factor SigI5 of Acetivibrio thermocellus (strain ATCC 27405 / DSM 1237 / JCM 9322 / NBRC 103400 / NCIMB 10682 / NRRL B-4536 / VPI 7372) (Clostridium thermocellum).